The chain runs to 218 residues: Antifreeze protein Maxi (218 aa).

A signal peptide spans 1 to 23; sequence MALSLFTVGQFIFLFWTISITEA.

It belongs to the type-I AFP family. In terms of assembly, homodimer. As to expression, detected in blood serum (at protein level). Detected in liver.

The protein resides in the secreted. Its function is as follows. Contributes to protect fish blood from freezing at subzero sea water temperatures. Lowers the blood freezing point by about 1.1 degrees at a concentration of 0.1 mg/ml, and by about 1.5 degrees at a concentration of 0.2 mg/ml. Binds to nascent ice crystals and prevents further growth. In Pseudopleuronectes americanus (Winter flounder), this protein is Antifreeze protein Maxi.